A 403-amino-acid polypeptide reads, in one-letter code: Stearoyl-[acyl-carrier-protein] 9-desaturase 4, chloroplastic (403 aa).

The transit peptide at 1–44 directs the protein to the chloroplast; it reads MALLLNSTMTVAMKQNPATAVSFMQTTCLGSSFSPPRHLQVSCV. Positions 140, 178, 181, 231, 264, and 267 each coordinate Fe cation.

Belongs to the fatty acid desaturase type 2 family. In terms of assembly, homodimer. Requires Fe(2+) as cofactor. Preferentially expressed in roots.

Its subcellular location is the plastid. The protein localises to the chloroplast. The enzyme catalyses octadecanoyl-[ACP] + 2 reduced [2Fe-2S]-[ferredoxin] + O2 + 2 H(+) = (9Z)-octadecenoyl-[ACP] + 2 oxidized [2Fe-2S]-[ferredoxin] + 2 H2O. It participates in lipid metabolism; fatty acid metabolism. In terms of biological role, converts stearoyl-ACP to oleoyl-ACP by introduction of a cis double bond between carbons 9 and 10 of the acyl chain. This Arabidopsis thaliana (Mouse-ear cress) protein is Stearoyl-[acyl-carrier-protein] 9-desaturase 4, chloroplastic (S-ACP-DES4).